A 354-amino-acid polypeptide reads, in one-letter code: MGRSKLQIIGPNGEIYQPTLKIQRNNDPNKDAEVLYEAMKGWGTNEDRIIGILGYRSSHQRIIIRDQFKALYGKDLITELSSETSGHFKKLLKMLLTDTDKMNARALYKAMKGGGTDESTIIEVLCTSSNCEIEDIKTAYQSVLKDYGISDPRRTLESDVEDDLSGPFKNLVIALLQAKREEIPFEIAEQIQSKGIKSVVDMNLVEQDVETLWDAGEARLGTDEAAIIKILVSRSVWHIQAIAQHFEKKYGKSLIDSLASETSGDFESALLLTLNTCLNRPKAYADLLLKAMKGLGTDDCTLMRIIVSRCELDLGSICQEFERSQGSSLEEWIRSETSGDYRKLLLALIGAEWS.

Annexin repeat units follow at residues 26-97 (NDPN…MLLT), 98-177 (DTDK…ALLQ), 203-275 (NLVE…LTLN), and 279-350 (NRPK…ALIG). Residues methionine 39, glycine 41, glycine 43, threonine 44, glutamate 46, glutamate 83, methionine 111, glycine 113, glycine 115, glutamate 118, aspartate 163, aspartate 265, methionine 292, glycine 294, leucine 295, glycine 296, and glutamate 336 each coordinate Ca(2+).

It belongs to the annexin family. Homodimer.

The protein localises to the tegument. Its subcellular location is the secreted. It localises to the extracellular exosome. The protein resides in the host cell. Involved in reproduction of the worm. Involved in host-parasite interaction. Delivered into the host cell by means of parasite exosomes. Binds to acidic phospholipid membranes in a calcium-dependent manner in vitro. Causes aggregation of liposomes in the presence of calcium, but not in its absence. Likely to promote membrane fusion. May provide structural integrity within the tegument. The protein is Annexin A13 of Schistosoma japonicum (Blood fluke).